Reading from the N-terminus, the 343-residue chain is UDP-N-acetylglucosamine--N-acetylmuramyl-(pentapeptide) pyrophosphoryl-undecaprenol N-acetylglucosamine transferase (343 aa).

UDP-N-acetyl-alpha-D-glucosamine-binding positions include 10–12, Asn113, Ser174, and Gln275; that span reads TGG.

The protein belongs to the glycosyltransferase 28 family. MurG subfamily.

The protein localises to the cell membrane. It catalyses the reaction di-trans,octa-cis-undecaprenyl diphospho-N-acetyl-alpha-D-muramoyl-L-alanyl-D-glutamyl-meso-2,6-diaminopimeloyl-D-alanyl-D-alanine + UDP-N-acetyl-alpha-D-glucosamine = di-trans,octa-cis-undecaprenyl diphospho-[N-acetyl-alpha-D-glucosaminyl-(1-&gt;4)]-N-acetyl-alpha-D-muramoyl-L-alanyl-D-glutamyl-meso-2,6-diaminopimeloyl-D-alanyl-D-alanine + UDP + H(+). It functions in the pathway cell wall biogenesis; peptidoglycan biosynthesis. Cell wall formation. Catalyzes the transfer of a GlcNAc subunit on undecaprenyl-pyrophosphoryl-MurNAc-pentapeptide (lipid intermediate I) to form undecaprenyl-pyrophosphoryl-MurNAc-(pentapeptide)GlcNAc (lipid intermediate II). The chain is UDP-N-acetylglucosamine--N-acetylmuramyl-(pentapeptide) pyrophosphoryl-undecaprenol N-acetylglucosamine transferase from Wolbachia sp. subsp. Drosophila simulans (strain wRi).